Consider the following 127-residue polypeptide: Major sperm protein 38 (127 aa).

Alanine 2 carries the post-translational modification N-acetylalanine. Positions 9–126 (DIQTQPGTKI…RRKNLPIEYN (118 aa)) constitute an MSP domain.

As to expression, sperm.

It is found in the cell projection. Its subcellular location is the pseudopodium. The protein localises to the cytoplasm. It localises to the cytoskeleton. Its function is as follows. Central component in molecular interactions underlying sperm crawling. Forms an extensive filament system that extends from sperm villipoda, along the leading edge of the pseudopod. This chain is Major sperm protein 38 (msp-38), found in Caenorhabditis elegans.